The sequence spans 175 residues: Coagulogen (175 aa).

Cystine bridges form between Cys8/Cys167, Cys10/Cys95, Cys60/Cys161, Cys65/Cys121, Cys75/Cys168, Cys88/Cys140, Cys127/Cys170, and Cys134/Cys172.

The protein belongs to the coagulin family. In terms of assembly, coagulogen is cleaved after Arg-18 and Arg-46 by a clotting enzyme contained in the hemocyte and activated by a bacterial endotoxin (lipopolysaccharide). This cleavage releases the peptide C and leaves 2 chains of coagulin, A and B, linked by two disulfide bonds. Coagulin molecules interlink to form a gel. As to expression, hemolymph.

The protein localises to the secreted. In terms of biological role, coagulogen is a gel-forming protein of hemolymph; it hinders the spread of invaders by immobilizing them. In Tachypleus gigas (Southeast Asian horseshoe crab), this protein is Coagulogen.